Consider the following 182-residue polypeptide: Adenine phosphoribosyltransferase (182 aa).

Belongs to the purine/pyrimidine phosphoribosyltransferase family. As to quaternary structure, homodimer.

Its subcellular location is the cytoplasm. It catalyses the reaction AMP + diphosphate = 5-phospho-alpha-D-ribose 1-diphosphate + adenine. Its pathway is purine metabolism; AMP biosynthesis via salvage pathway; AMP from adenine: step 1/1. Functionally, catalyzes a salvage reaction resulting in the formation of AMP, that is energically less costly than de novo synthesis. The sequence is that of Adenine phosphoribosyltransferase from Pseudomonas syringae pv. tomato (strain ATCC BAA-871 / DC3000).